A 220-amino-acid chain; its full sequence is Iron-sulfur cluster repair protein YtfE (220 aa).

Belongs to the RIC family. YtfE subfamily. In terms of assembly, homodimer.

It localises to the cytoplasm. In terms of biological role, di-iron-containing protein involved in the repair of iron-sulfur clusters damaged by oxidative and nitrosative stress conditions. In Shigella boydii serotype 4 (strain Sb227), this protein is Iron-sulfur cluster repair protein YtfE.